The sequence spans 119 residues: Large ribosomal subunit protein uL18 (119 aa).

A disordered region spans residues 1 to 25 (MITKIDKNKVRKKRHARVRSKISGT). The span at 9–20 (KVRKKRHARVRS) shows a compositional bias: basic residues.

Belongs to the universal ribosomal protein uL18 family. As to quaternary structure, part of the 50S ribosomal subunit; part of the 5S rRNA/L5/L18/L25 subcomplex. Contacts the 5S and 23S rRNAs.

This is one of the proteins that bind and probably mediate the attachment of the 5S RNA into the large ribosomal subunit, where it forms part of the central protuberance. This chain is Large ribosomal subunit protein uL18, found in Listeria innocua serovar 6a (strain ATCC BAA-680 / CLIP 11262).